The chain runs to 501 residues: MMAECDPTDGEPGNGSGDSTPETNFLSSEVPAVLFEKTRSAPSLGLSLNPGAAVRISDSTESVLTELEADGSGEEALLLPGPAGSLSPRAGKEKRTRRNMLSSSSDNLASPGNSSGEFNHFPEDPEFGEIIQRAEQAIENGVFPERISQGSSGSYFVKDPKGKIIGVFKPKSEEPYGHLNPKWTKYFHKVCCPCCFGRGCLIPNQGYLSEAAASLVDQKLGLWIVPKTKVVHLASETFHYNAIDRAKSRGKKYALEKVPKVGRRFHRVGLPPKVGSFQLFVEGYHEADFWLRKFEAEPLPENMRKQLQSQFERLVVLDYVIRNTDRGNDNWLIKYEKPGDGELTEKESEWTDPKDSAIKIAAIDNGLAFPFKHPDEWRAYPFHWAWLPQAKVAFSQETRDLVLSRISDMNFVQDLCEDLYEMFRTDKGFDKTMFEKQMSVMRGQILNLTQALKDGKSPIQLVQMPRVVVERSRSGGQGRVVQLGNAFTQTFHCKRPFFTSW.

Disordered stretches follow at residues 1-30 (MMAECDPTDGEPGNGSGDSTPETNFLSSEV) and 65-122 (TELE…NHFP). Residues 17–27 (GDSTPETNFLS) are compositionally biased toward polar residues. The span at 76–88 (ALLLPGPAGSLSP) shows a compositional bias: low complexity. Residues 99–117 (NMLSSSSDNLASPGNSSGE) show a composition bias toward polar residues. The PI3K/PI4K catalytic domain occupies 141–471 (GVFPERISQG…VQMPRVVVER (331 aa)). The segment at 147-153 (ISQGSSG) is G-loop. ATP-binding residues include serine 154 and lysine 169. Positions 174 to 176 (EPY) are important for substrate binding. The important for interaction with membranes stretch occupies residues 182–195 (KWTKYFHKVCCPCC). ATP-binding positions include 278–281 (QLFV) and 292–293 (RK). Positions 285–293 (HEADFWLRK) are important for interaction with membranes. Residues 322-330 (RNTDRGNDN) are catalytic loop. An activation loop region spans residues 362–382 (AIDNGLAFPFKHPDEWRAYPF). Aspartate 364 contacts ATP. An important for interaction with membranes region spans residues 377-386 (WRAYPFHWAW).

It belongs to the PI3/PI4-kinase family. Type II PI4K subfamily.

It is found in the cytoplasm. It localises to the cytosol. The protein resides in the golgi apparatus membrane. The protein localises to the endoplasmic reticulum membrane. Its subcellular location is the cell membrane. It is found in the early endosome membrane. It carries out the reaction a 1,2-diacyl-sn-glycero-3-phospho-(1D-myo-inositol) + ATP = a 1,2-diacyl-sn-glycero-3-phospho-(1D-myo-inositol 4-phosphate) + ADP + H(+). In terms of biological role, contributes to the overall PI4-kinase activity of the cell. This contribution may be especially significant in plasma membrane, endosomal and Golgi compartments. The phosphorylation of phosphatidylinositol (PI) to PI4P is the first committed step in the generation of phosphatidylinositol 4,5-bisphosphate (PIP2), a precursor of the second messenger inositol 1,4,5-trisphosphate (InsP3). The polypeptide is Phosphatidylinositol 4-kinase type 2-beta (pi4k2b) (Danio rerio (Zebrafish)).